The sequence spans 163 residues: Ureidoglycolate lyase (163 aa).

It belongs to the ureidoglycolate lyase family. In terms of assembly, homodimer. It depends on Ni(2+) as a cofactor.

It catalyses the reaction (S)-ureidoglycolate = urea + glyoxylate. It functions in the pathway nitrogen metabolism; (S)-allantoin degradation. In terms of biological role, catalyzes the catabolism of the allantoin degradation intermediate (S)-ureidoglycolate, generating urea and glyoxylate. Involved in the utilization of allantoin as nitrogen source. The chain is Ureidoglycolate lyase from Mesorhizobium japonicum (strain LMG 29417 / CECT 9101 / MAFF 303099) (Mesorhizobium loti (strain MAFF 303099)).